A 624-amino-acid chain; its full sequence is Phosphoenolpyruvate carboxykinase [GTP] (624 aa).

Residues R88 and 222-224 contribute to the substrate site; that span reads YGG. Mn(2+) contacts are provided by K231 and H250. S272 is a binding site for substrate. 273–278 contacts GTP; it reads MCGKTS. C274 is an active-site residue. D291 is a binding site for Mn(2+). 386 to 388 contributes to the substrate binding site; that stretch reads NAR. The GTP site is built by R388 and R420.

Belongs to the phosphoenolpyruvate carboxykinase [GTP] family. Requires Mn(2+) as cofactor.

It localises to the cytoplasm. It carries out the reaction oxaloacetate + GTP = phosphoenolpyruvate + GDP + CO2. The protein operates within carbohydrate biosynthesis; gluconeogenesis. In terms of biological role, catalyzes the conversion of oxaloacetate (OAA) to phosphoenolpyruvate (PEP), the rate-limiting step in the metabolic pathway that produces glucose from lactate and other precursors derived from the citric acid cycle. This chain is Phosphoenolpyruvate carboxykinase [GTP], found in Pyrococcus furiosus (strain ATCC 43587 / DSM 3638 / JCM 8422 / Vc1).